The primary structure comprises 305 residues: UDP-3-O-acyl-N-acetylglucosamine deacetylase (305 aa).

The Zn(2+) site is built by His79, His238, and Asp242. His265 acts as the Proton donor in catalysis.

It belongs to the LpxC family. Zn(2+) serves as cofactor.

The catalysed reaction is a UDP-3-O-[(3R)-3-hydroxyacyl]-N-acetyl-alpha-D-glucosamine + H2O = a UDP-3-O-[(3R)-3-hydroxyacyl]-alpha-D-glucosamine + acetate. Its pathway is glycolipid biosynthesis; lipid IV(A) biosynthesis; lipid IV(A) from (3R)-3-hydroxytetradecanoyl-[acyl-carrier-protein] and UDP-N-acetyl-alpha-D-glucosamine: step 2/6. Functionally, catalyzes the hydrolysis of UDP-3-O-myristoyl-N-acetylglucosamine to form UDP-3-O-myristoylglucosamine and acetate, the committed step in lipid A biosynthesis. This chain is UDP-3-O-acyl-N-acetylglucosamine deacetylase, found in Vibrio campbellii (strain ATCC BAA-1116).